The sequence spans 1178 residues: Pyruvate carboxylase, mitochondrial (1178 aa).

Residues 1 to 20 (MLKFRTVHGGLRLLGIRRTS) constitute a mitochondrion transit peptide. N6-acetyllysine occurs at positions 35 and 39. The Biotin carboxylation domain maps to 36–486 (PIKKVMVANR…DTQFIDENPE (451 aa)). Lysine 79 is modified (N6-acetyllysine; alternate). Position 79 is an N6-succinyllysine; alternate (lysine 79). Residues lysine 148 and lysine 152 each carry the N6-acetyllysine modification. The ATP site is built by lysine 152 and glutamate 236. Residues 156-353 (RAIAIAAGVP…LVHAQIHVAE (198 aa)) enclose the ATP-grasp domain. An N6-acetyllysine modification is found at lysine 241. Residue histidine 271 coordinates ATP. An N6-acetyllysine mark is found at lysine 297 and lysine 319. Residue arginine 328 is part of the active site. At lysine 434 the chain carries N6-acetyllysine. Lysine 442 is subject to N6-succinyllysine. The Pyruvate carboxyltransferase domain occupies 563–832 (LLLMDTTFRD…DTEVPMERVF (270 aa)). 571 to 575 (RDAHQ) serves as a coordination point for substrate. Residue aspartate 572 coordinates Mn(2+). The residue at position 589 (lysine 589) is an N6-acetyllysine. Residue arginine 644 coordinates substrate. An N6-acetyllysine mark is found at lysine 661 and lysine 717. Lysine 741 lines the Mn(2+) pocket. At lysine 741 the chain carries N6-carboxylysine. Lysine 748 is modified (N6-acetyllysine). The Mn(2+) site is built by histidine 771 and histidine 773. Residue lysine 892 is modified to N6-acetyllysine. Threonine 908 is a substrate binding site. 2 positions are modified to N6-acetyllysine: lysine 969 and lysine 992. At threonine 1003 the chain carries Phosphothreonine. An N6-acetyllysine mark is found at lysine 1061, lysine 1090, and lysine 1124. The Biotinyl-binding domain occupies 1109–1178 (KGQIGAPMPG…EGDDLILEIE (70 aa)). The residue at position 1144 (lysine 1144) is an N6-biotinyllysine.

Homotetramer. Interacts (via the biotin carboxylation domain) with SIRT4. Biotin serves as cofactor. Mn(2+) is required as a cofactor. In terms of processing, acetylation of Lys-748 might play a role in catalytic activity regulation.

It is found in the mitochondrion matrix. The enzyme catalyses hydrogencarbonate + pyruvate + ATP = oxaloacetate + ADP + phosphate + H(+). It participates in carbohydrate biosynthesis; gluconeogenesis. In terms of biological role, pyruvate carboxylase catalyzes a 2-step reaction, involving the ATP-dependent carboxylation of the covalently attached biotin in the first step and the transfer of the carboxyl group to pyruvate in the second. Catalyzes in a tissue specific manner, the initial reactions of glucose (liver, kidney) and lipid (adipose tissue, liver, brain) synthesis from pyruvate. The protein is Pyruvate carboxylase, mitochondrial of Homo sapiens (Human).